We begin with the raw amino-acid sequence, 87 residues long: Small ribosomal subunit protein uS15c (87 aa).

The protein belongs to the universal ribosomal protein uS15 family. As to quaternary structure, part of the 30S ribosomal subunit.

It localises to the plastid. The protein localises to the chloroplast. This Nymphaea alba (White water-lily) protein is Small ribosomal subunit protein uS15c (rps15).